The following is a 276-amino-acid chain: NADPH-dependent 7-cyano-7-deazaguanine reductase (276 aa).

Position 83–85 (83–85) interacts with substrate; sequence IES. 85–86 contributes to the NADPH binding site; that stretch reads SK. The Thioimide intermediate role is filled by C184. Residue D191 is the Proton donor of the active site. A substrate-binding site is contributed by 223 to 224; the sequence is HE. 252 to 253 contributes to the NADPH binding site; it reads RG.

Belongs to the GTP cyclohydrolase I family. QueF type 2 subfamily. As to quaternary structure, homodimer.

It localises to the cytoplasm. It catalyses the reaction 7-aminomethyl-7-carbaguanine + 2 NADP(+) = 7-cyano-7-deazaguanine + 2 NADPH + 3 H(+). Its pathway is tRNA modification; tRNA-queuosine biosynthesis. Functionally, catalyzes the NADPH-dependent reduction of 7-cyano-7-deazaguanine (preQ0) to 7-aminomethyl-7-deazaguanine (preQ1). The chain is NADPH-dependent 7-cyano-7-deazaguanine reductase from Pseudomonas syringae pv. tomato (strain ATCC BAA-871 / DC3000).